Here is a 342-residue protein sequence, read N- to C-terminus: tRNA-specific 2-thiouridylase MnmA (342 aa).

Residues 6–13 (GMSGGVDS) and L32 each bind ATP. C99 functions as the Nucleophile in the catalytic mechanism. An intrachain disulfide couples C99 to C190. G124 is a binding site for ATP. The tract at residues 140 to 142 (KDQ) is interaction with tRNA. C190 (cysteine persulfide intermediate) is an active-site residue. The interval 292–293 (RY) is interaction with tRNA.

The protein belongs to the MnmA/TRMU family.

Its subcellular location is the cytoplasm. The catalysed reaction is S-sulfanyl-L-cysteinyl-[protein] + uridine(34) in tRNA + AH2 + ATP = 2-thiouridine(34) in tRNA + L-cysteinyl-[protein] + A + AMP + diphosphate + H(+). Functionally, catalyzes the 2-thiolation of uridine at the wobble position (U34) of tRNA, leading to the formation of s(2)U34. The chain is tRNA-specific 2-thiouridylase MnmA from Hydrogenobaculum sp. (strain Y04AAS1).